The following is a 290-amino-acid chain: 4-hydroxybenzoate octaprenyltransferase (290 aa).

A run of 8 helical transmembrane segments spans residues 40–60, 99–119, 120–140, 142–162, 165–185, 215–235, 239–259, and 267–287; these read IAGA…GVVI, LALF…LNEL, TFWL…TKRF, FMPQ…AFAA, GEVP…TVAY, LMIA…GHRL, WPWY…HSLI, and SFHA…GLYF.

This sequence belongs to the UbiA prenyltransferase family. It depends on Mg(2+) as a cofactor.

The protein resides in the cell inner membrane. It carries out the reaction all-trans-octaprenyl diphosphate + 4-hydroxybenzoate = 4-hydroxy-3-(all-trans-octaprenyl)benzoate + diphosphate. It functions in the pathway cofactor biosynthesis; ubiquinone biosynthesis. Functionally, catalyzes the prenylation of para-hydroxybenzoate (PHB) with an all-trans polyprenyl group. Mediates the second step in the final reaction sequence of ubiquinone-8 (UQ-8) biosynthesis, which is the condensation of the polyisoprenoid side chain with PHB, generating the first membrane-bound Q intermediate 3-octaprenyl-4-hydroxybenzoate. The chain is 4-hydroxybenzoate octaprenyltransferase from Alcanivorax borkumensis (strain ATCC 700651 / DSM 11573 / NCIMB 13689 / SK2).